The chain runs to 373 residues: Queuine tRNA-ribosyltransferase accessory subunit 2 (373 aa).

4 residues coordinate Zn(2+): Cys320, Cys322, Cys325, and His351.

Belongs to the queuine tRNA-ribosyltransferase family. QTRT2 subfamily. Heterodimer of a catalytic subunit and an accessory subunit. Zn(2+) is required as a cofactor.

Its subcellular location is the cytoplasm. In terms of biological role, non-catalytic subunit of the queuine tRNA-ribosyltransferase (TGT) that catalyzes the base-exchange of a guanine (G) residue with queuine (Q) at position 34 (anticodon wobble position) in tRNAs with GU(N) anticodons (tRNA-Asp, -Asn, -His and -Tyr), resulting in the hypermodified nucleoside queuosine (7-(((4,5-cis-dihydroxy-2-cyclopenten-1-yl)amino)methyl)-7-deazaguanosine). The sequence is that of Queuine tRNA-ribosyltransferase accessory subunit 2 from Caenorhabditis elegans.